The primary structure comprises 238 residues: uncharacterized protein (238 aa).

6 consecutive transmembrane segments (helical) span residues 24 to 44 (IFIA…YMKN), 78 to 98 (GFLL…LPGL), 109 to 129 (ILFI…IILV), 156 to 176 (FILL…IQVI), 188 to 208 (MYAY…IITP), and 216 to 236 (IIMS…LKIL).

This sequence belongs to the TatC family.

The protein localises to the plastid. The protein resides in the chloroplast membrane. This is an uncharacterized protein from Gracilaria tenuistipitata var. liui (Red alga).